Here is a 310-residue protein sequence, read N- to C-terminus: GPN-loop GTPase 2 (310 aa).

Ala2 carries the post-translational modification N-acetylalanine. 19–24 (GSGKTT) provides a ligand contact to GTP. Residues 76-78 (GPN) carry the Gly-Pro-Asn (GPN)-loop; involved in dimer interface motif. A GTP-binding site is contributed by 178 to 181 (SKMD).

The protein belongs to the GPN-loop GTPase family. As to quaternary structure, heterodimers with GPN1 or GPN3. Binds to RNA polymerase II (RNAPII).

Small GTPase required for proper localization of RNA polymerase II and III (RNAPII and RNAPIII). May act at an RNAP assembly step prior to nuclear import. This is GPN-loop GTPase 2 from Sus scrofa (Pig).